Consider the following 113-residue polypeptide: Tachykinin-4 (113 aa).

The signal sequence occupies residues 1 to 20 (MLPCLALLLLMELSVCTVAG). The residue at position 67 (Met-67) is a Methionine amide. Positions 71 to 79 (VGGRPLIQP) are excised as a propeptide. Leucine amide is present on Leu-95. The propeptide occupies 98–113 (RSLFTEGREDEAQGSE).

Belongs to the tachykinin family. In terms of tissue distribution, expressed at low levels in the uterus of both pregnant and non-pregnant women. Isoform 1 is found only in the adrenal gland and fetal liver. Isoform 2 is found in heart, liver, bone marrow, prostate, adrenal gland and testis. Isoform 3 and isoform 4 are expressed predominantly in adrenal gland and placenta.

It is found in the secreted. Tachykinins are active peptides which excite neurons, evoke behavioral responses, are potent vasodilators and secretagogues, and contract (directly or indirectly) many smooth muscles. Endokinin-A induces thermal hyperalgesia and pain-related behavior such as scratching following intrathecal administration in rats. These effects are suppressed by treatment with endokinin-C. Endokinin-A/B reduces arterial blood pressure and increases sperm motility. The sequence is that of Tachykinin-4 from Homo sapiens (Human).